Consider the following 595-residue polypeptide: Tyrosine-protein phosphatase cdcA (595 aa).

Residues 32–57 (TPFPYPAEQPKSPSKRRAQASPSKKR) form a disordered region. A compositionally biased stretch (basic residues) spans 44–57 (PSKRRAQASPSKKR). Residues 233–381 (LPSTVSEVRS…QGSFREWWFE (149 aa)) enclose the Tyrosine-protein phosphatase domain. C322 functions as the Phosphocysteine intermediate in the catalytic mechanism. The segment at 392–595 (QPNPVTPGRS…GSPVRVKAQA (204 aa)) is disordered. Basic residues predominate over residues 449-461 (RKSHRKDSRHHPY). A compositionally biased stretch (basic and acidic residues) spans 471–483 (VDKDTRKTRRSTD). Residues 502-526 (SKSPAASPGQRSISYSATVTASYTL) show a composition bias toward polar residues.

It belongs to the protein-tyrosine phosphatase family. Non-receptor class CDC14 subfamily.

The protein localises to the nucleus. Its subcellular location is the cytoplasm. It is found in the cell septum. It catalyses the reaction O-phospho-L-tyrosyl-[protein] + H2O = L-tyrosyl-[protein] + phosphate. Functionally, protein phosphatase which antagonizes mitotic cyclin-dependent kinase nimX, the inactivation of which is essential for exit from mitosis. To access its substrates, is released from nucleolar sequestration during mitosis. Plays an essential in coordinating the nuclear division cycle with cytokinesis through the cytokinesis checkpoint. Involved in chromosome segregation, where it is required for meiosis I spindle dissambly as well as for establishing two consecutive chromosome segregation phases. Required for the transcription of the two major endoglucanase genes eglA and eglB and growth on synthetic cellulose as the sole carbon source. This is Tyrosine-protein phosphatase cdcA (cdcA) from Emericella nidulans (strain FGSC A4 / ATCC 38163 / CBS 112.46 / NRRL 194 / M139) (Aspergillus nidulans).